Reading from the N-terminus, the 322-residue chain is Thioredoxin reductase (322 aa).

FAD contacts are provided by residues 12-15 (SGPA), 34-42 (EGAVTAGGA), asparagine 51, and valine 84. Cysteines 136 and 139 form a disulfide. 4 residues coordinate NADP(+): histidine 176, arginine 182, isoleucine 239, and tyrosine 259. FAD-binding positions include aspartate 279 and 286-289 (RQAI). An NADP(+)-binding site is contributed by arginine 286.

This sequence belongs to the class-II pyridine nucleotide-disulfide oxidoreductase family. Homodimer. FAD is required as a cofactor.

The protein resides in the cytoplasm. It carries out the reaction [thioredoxin]-dithiol + NADP(+) = [thioredoxin]-disulfide + NADPH + H(+). The sequence is that of Thioredoxin reductase from Streptomyces coelicolor (strain ATCC BAA-471 / A3(2) / M145).